We begin with the raw amino-acid sequence, 343 residues long: N-acetyl-gamma-glutamyl-phosphate reductase (343 aa).

Cysteine 149 is a catalytic residue.

It belongs to the NAGSA dehydrogenase family. Type 1 subfamily.

It is found in the cytoplasm. It carries out the reaction N-acetyl-L-glutamate 5-semialdehyde + phosphate + NADP(+) = N-acetyl-L-glutamyl 5-phosphate + NADPH + H(+). The protein operates within amino-acid biosynthesis; L-arginine biosynthesis; N(2)-acetyl-L-ornithine from L-glutamate: step 3/4. Its function is as follows. Catalyzes the NADPH-dependent reduction of N-acetyl-5-glutamyl phosphate to yield N-acetyl-L-glutamate 5-semialdehyde. The polypeptide is N-acetyl-gamma-glutamyl-phosphate reductase (Exiguobacterium sibiricum (strain DSM 17290 / CCUG 55495 / CIP 109462 / JCM 13490 / 255-15)).